The primary structure comprises 687 residues: Protein FAR1-RELATED SEQUENCE 1 (687 aa).

The region spanning 35–137 is the FAR1 domain; sequence EFYKEYANSV…VKEHNHEIFT (103 aa). One can recognise an MULE domain in the interval 211–254; that stretch reads KAMHGCRPRVILTKHDQMLKEAVLEVFPSSRHCFYMWDTLGQMP. The SWIM-type zinc finger occupies 440–476; it reads FVVVWNSESSEVVCSCRLFELKGFLCRHAMIVLQMSG. The stretch at 540 to 562 forms a coiled coil; that stretch reads NVLNEALRKWENKSNLIQNLEES.

The protein belongs to the FHY3/FAR1 family. Expressed in rosette and cauline leaves, inflorescences stems, flowers and siliques.

It localises to the nucleus. Functionally, putative transcription activator involved in regulating light control of development. The polypeptide is Protein FAR1-RELATED SEQUENCE 1 (FRS1) (Arabidopsis thaliana (Mouse-ear cress)).